A 173-amino-acid chain; its full sequence is Putative 4-hydroxy-4-methyl-2-oxoglutarate aldolase (173 aa).

Substrate is bound by residues 89–92 (GGNL) and Arg-111. Residue Asp-112 participates in a divalent metal cation binding.

It belongs to the class II aldolase/RraA-like family. As to quaternary structure, homotrimer. A divalent metal cation is required as a cofactor.

It catalyses the reaction 4-hydroxy-4-methyl-2-oxoglutarate = 2 pyruvate. The enzyme catalyses oxaloacetate + H(+) = pyruvate + CO2. Catalyzes the aldol cleavage of 4-hydroxy-4-methyl-2-oxoglutarate (HMG) into 2 molecules of pyruvate. Also contains a secondary oxaloacetate (OAA) decarboxylase activity due to the common pyruvate enolate transition state formed following C-C bond cleavage in the retro-aldol and decarboxylation reactions. The polypeptide is Putative 4-hydroxy-4-methyl-2-oxoglutarate aldolase (Albidiferax ferrireducens (strain ATCC BAA-621 / DSM 15236 / T118) (Rhodoferax ferrireducens)).